The sequence spans 298 residues: Nucleotide-binding protein Dred_3054 (298 aa).

20 to 27 (GMSGAGKT) contacts ATP. 71-74 (DIRG) lines the GTP pocket.

Belongs to the RapZ-like family.

Displays ATPase and GTPase activities. The chain is Nucleotide-binding protein Dred_3054 from Desulforamulus reducens (strain ATCC BAA-1160 / DSM 100696 / MI-1) (Desulfotomaculum reducens).